Here is a 355-residue protein sequence, read N- to C-terminus: Guanine nucleotide-binding protein G(i) subunit alpha-2 (355 aa).

Gly2 carries N-myristoyl glycine lipidation. Cys3 carries S-palmitoyl cysteine lipidation. A G-alpha domain is found at 32–355; it reads REVKLLLLGA…KNNLKDCGLF (324 aa). The G1 motif stretch occupies residues 35–48; it reads KLLLLGAGESGKST. GTP-binding positions include 40–47, 176–182, 201–205, 270–273, and Ala327; these read GAGESGKS, LRTRVKT, DVGGQ, and NKKD. 2 residues coordinate Mg(2+): Ser47 and Thr182. Residues 174 to 182 form a G2 motif region; that stretch reads DVLRTRVKT. The tract at residues 197-206 is G3 motif; that stretch reads FKMFDVGGQR. Residues 266-273 are G4 motif; sequence ILFLNKKD. Positions 325 to 330 are G5 motif; sequence TCATDT.

It belongs to the G-alpha family. G(i/o/t/z) subfamily. In terms of assembly, g proteins are composed of 3 units; alpha, beta and gamma. The alpha chain contains the guanine nucleotide binding site.

It localises to the cytoplasm. The protein localises to the cytoskeleton. It is found in the microtubule organizing center. Its subcellular location is the centrosome. The protein resides in the cell membrane. Functionally, guanine nucleotide-binding proteins (G proteins) are involved as modulators or transducers in various transmembrane signaling systems. The G(i) proteins are involved in hormonal regulation of adenylate cyclase: they inhibit the cyclase in response to beta-adrenergic stimuli. May play a role in cell division. The polypeptide is Guanine nucleotide-binding protein G(i) subunit alpha-2 (GNAI2) (Gallus gallus (Chicken)).